The primary structure comprises 581 residues: Intermediate filament protein ifa-3 (581 aa).

Residues 1-33 (MADPDSYRSSITSRPAFNRTVTSSTQNYGTPAS) are disordered. Residues 1–74 (MADPDSYRSS…RDDREREKKE (74 aa)) form a head region. A compositionally biased stretch (polar residues) spans 7–33 (YRSSITSRPAFNRTVTSSTQNYGTPAS). The IF rod domain maps to 71 to 424 (EKKEITELND…RMLEGNSEEN (354 aa)). The segment at 75-106 (ITELNDRLASYIGKVRFLAAQNRKLEADLNVL) is coil 1A. A linker 1 region spans residues 107–120 (QSRFGKSTGSVKIM). A coil 1B region spans residues 121–258 (YEMEITTATN…RGFETELKDL (138 aa)). The tract at residues 259 to 276 (QAQAARDTTSENREYFKN) is linker 12. A coil 2 region spans residues 277 to 424 (ELMNSIRDIR…RMLEGNSEEN (148 aa)). A tail region spans residues 425–578 (GLRQLVEKVV…THMQRQSQQT (154 aa)). One can recognise an LTD domain in the interval 457–574 (SRTSYQRSAK…EERATHMQRQ (118 aa)).

The protein belongs to the intermediate filament family. As to quaternary structure, forms some heteromeric filaments with ifb-1. Expressed in the embryonic and larval hypodermis. Also expressed in the ventral nerve cord of larvae.

Its subcellular location is the cytoplasm. In terms of biological role, cytoplasmic intermediate filaments provide mechanical strength to cells. Essential protein, involved in attachment structures in epidermal cells that connect muscles to the external cuticle. Required for epidermal morphogenesis in embryos. Probable component of embryonic epidermal attachment structures. This Caenorhabditis elegans protein is Intermediate filament protein ifa-3 (ifa-3).